The sequence spans 157 residues: Ribosomal RNA large subunit methyltransferase H (157 aa).

S-adenosyl-L-methionine contacts are provided by residues L75, G106, and 125–130 (FSELTF).

The protein belongs to the RNA methyltransferase RlmH family. As to quaternary structure, homodimer.

It localises to the cytoplasm. It catalyses the reaction pseudouridine(1915) in 23S rRNA + S-adenosyl-L-methionine = N(3)-methylpseudouridine(1915) in 23S rRNA + S-adenosyl-L-homocysteine + H(+). Its function is as follows. Specifically methylates the pseudouridine at position 1915 (m3Psi1915) in 23S rRNA. The protein is Ribosomal RNA large subunit methyltransferase H of Malacoplasma penetrans (strain HF-2) (Mycoplasma penetrans).